We begin with the raw amino-acid sequence, 199 residues long: Large ribosomal subunit protein eL13A (199 aa).

2 positions are modified to phosphothreonine: T144 and T152.

Belongs to the eukaryotic ribosomal protein eL13 family. Component of the large ribosomal subunit (LSU). Mature yeast ribosomes consist of a small (40S) and a large (60S) subunit. The 40S small subunit contains 1 molecule of ribosomal RNA (18S rRNA) and 33 different proteins (encoded by 57 genes). The large 60S subunit contains 3 rRNA molecules (25S, 5.8S and 5S rRNA) and 46 different proteins (encoded by 81 genes).

Its subcellular location is the cytoplasm. Functionally, component of the ribosome, a large ribonucleoprotein complex responsible for the synthesis of proteins in the cell. The small ribosomal subunit (SSU) binds messenger RNAs (mRNAs) and translates the encoded message by selecting cognate aminoacyl-transfer RNA (tRNA) molecules. The large subunit (LSU) contains the ribosomal catalytic site termed the peptidyl transferase center (PTC), which catalyzes the formation of peptide bonds, thereby polymerizing the amino acids delivered by tRNAs into a polypeptide chain. The nascent polypeptides leave the ribosome through a tunnel in the LSU and interact with protein factors that function in enzymatic processing, targeting, and the membrane insertion of nascent chains at the exit of the ribosomal tunnel. The chain is Large ribosomal subunit protein eL13A from Saccharomyces cerevisiae (strain ATCC 204508 / S288c) (Baker's yeast).